Here is a 233-residue protein sequence, read N- to C-terminus: Transcriptional regulatory protein NatR (233 aa).

The region spanning 3 to 117 is the Response regulatory domain; that stretch reads KVGLVDDYRV…RLAASFDRYL (115 aa). Residue D54 is modified to 4-aspartylphosphate. In terms of domain architecture, HTH LytTR-type spans 129–233; that stretch reads ILIKQKSEMH…QLDYFQNYYF (105 aa).

In terms of processing, phosphorylated by NatK.

Its subcellular location is the cytoplasm. Its function is as follows. Member of the two-component regulatory system NatK/NatR that positively regulates the expression of the natAB operon. Acts by binding directly to the promoter of natAB. This Bacillus subtilis (strain 168) protein is Transcriptional regulatory protein NatR.